The sequence spans 386 residues: Leupaxin (386 aa).

N-acetylmethionine is present on Met1. The LD motif 1 motif lies at 3–15 (ELDALLEELERCT). Residue Ser19 is modified to Phosphoserine. The disordered stretch occupies residues 19–52 (SEEYSNPVSCHLDQQSTEESKIPQTPKTLSSQGN). The residue at position 22 (Tyr22) is a Phosphotyrosine. Positions 22-52 (YSNPVSCHLDQQSTEESKIPQTPKTLSSQGN) are enriched in polar residues. The residue at position 54 (Ser54) is a Phosphoserine. A Phosphotyrosine modification is found at Tyr62. Short sequence motifs (LD motif) lie at residues 70-82 (NVYS…KESV) and 92-103 (QLDELMAHLSEM). Residue Tyr72 is modified to Phosphotyrosine; by LYN. Ser81 is modified (phosphoserine). LIM zinc-binding domains are found at residues 150-208 (GYCA…RLFS), 209-267 (PRCA…AMFS), 268-326 (PKCG…HRRG), and 327-386 (TLCH…LFSQ).

This sequence belongs to the paxillin family. Interacts with unphosphorylated ITGA4. Interacts with AR and SRF. Interacts with PTK2B/PYK2, PTPN22 and PTPN12. Interacts (via LD motif 3) with LYN and the interaction is induced upon B-cell antigen receptor (BCR) activation. Interacts (via LD motif 3) with PTK2/FAK. Post-translationally, phosphorylated on tyrosine residues. Phosphorylation on Tyr-72 is important for its inhibitory function. Bombesin stimulates phosphorylation on Tyr-22, Tyr-62 and Tyr-72. In terms of tissue distribution, expressed in osteoclasts (at protein level). Highly expressed in vascular smooth muscle.

The protein localises to the cytoplasm. It localises to the cell junction. The protein resides in the focal adhesion. It is found in the nucleus. Its subcellular location is the perinuclear region. The protein localises to the cell projection. It localises to the podosome. The protein resides in the cell membrane. Its function is as follows. Transcriptional coactivator for androgen receptor (AR) and serum response factor (SRF). Contributes to the regulation of cell adhesion, spreading and cell migration and acts as a negative regulator in integrin-mediated cell adhesion events. Suppresses the integrin-induced tyrosine phosphorylation of paxillin (PXN). May play a critical role as an adapter protein in the formation of the adhesion zone in osteoclasts. Negatively regulates B-cell antigen receptor (BCR) signaling. This Mus musculus (Mouse) protein is Leupaxin (Lpxn).